Here is a 249-residue protein sequence, read N- to C-terminus: Phosphate import ATP-binding protein PstB 3 (249 aa).

The ABC transporter domain occupies 4–244 (LVINNLDLYY…PQDERTENYI (241 aa)). 36–43 (GPSGCGKS) provides a ligand contact to ATP.

The protein belongs to the ABC transporter superfamily. Phosphate importer (TC 3.A.1.7) family. In terms of assembly, the complex is composed of two ATP-binding proteins (PstB), two transmembrane proteins (PstC and PstA) and a solute-binding protein (PstS).

Its subcellular location is the cell membrane. It carries out the reaction phosphate(out) + ATP + H2O = ADP + 2 phosphate(in) + H(+). Its function is as follows. Part of the ABC transporter complex PstSACB involved in phosphate import. Responsible for energy coupling to the transport system. In Streptococcus agalactiae serotype Ia (strain ATCC 27591 / A909 / CDC SS700), this protein is Phosphate import ATP-binding protein PstB 3.